Here is a 566-residue protein sequence, read N- to C-terminus: Probable cytochrome P450 519D1 (566 aa).

A helical membrane pass occupies residues 1–21 (MNVFVLTFFICIIYLLFDLIK). The segment at 471–491 (FNNNNNNNNNNNNNNSNNKHK) is disordered. Positions 472–487 (NNNNNNNNNNNNNNSN) are enriched in low complexity. Cys-510 is a heme binding site.

This sequence belongs to the cytochrome P450 family. Heme serves as cofactor.

The protein resides in the membrane. In Dictyostelium discoideum (Social amoeba), this protein is Probable cytochrome P450 519D1 (cyp519D1).